Consider the following 355-residue polypeptide: Peptide chain release factor 1 (355 aa).

Q233 is modified (N5-methylglutamine). The span at 283–293 shows a compositional bias: basic and acidic residues; that stretch reads EKNKDRADARK. Residues 283-304 form a disordered region; sequence EKNKDRADARKSQVGTGDRSER.

The protein belongs to the prokaryotic/mitochondrial release factor family. Post-translationally, methylated by PrmC. Methylation increases the termination efficiency of RF1.

The protein resides in the cytoplasm. In terms of biological role, peptide chain release factor 1 directs the termination of translation in response to the peptide chain termination codons UAG and UAA. The protein is Peptide chain release factor 1 of Finegoldia magna (strain ATCC 29328 / DSM 20472 / WAL 2508) (Peptostreptococcus magnus).